The primary structure comprises 145 residues: Antiholin-like protein LrgA (145 aa).

Helical transmembrane passes span 13 to 30, 40 to 62, 69 to 91, and 95 to 117; these read FFHQ…SKII, GSVI…LGEV, LTNN…LGVI, and PFLI…GYVT.

It belongs to the CidA/LrgA family. LrgA subfamily.

It is found in the cell membrane. Functionally, inhibits the expression or activity of extracellular murein hydrolases by interacting, possibly with LrgB, with the holin-like proteins CidA and/or CidB. The LrgAB and CidAB proteins may affect the proton motive force of the membrane. May be involved in programmed cell death (PCD), possibly triggering PCD in response to antibiotics and environmental stresses. The sequence is that of Antiholin-like protein LrgA from Staphylococcus aureus (strain MW2).